A 410-amino-acid polypeptide reads, in one-letter code: Peptidase T (410 aa).

A Zn(2+)-binding site is contributed by His79. Residue Asp81 is part of the active site. Position 142 (Asp142) interacts with Zn(2+). Glu176 functions as the Proton acceptor in the catalytic mechanism. Zn(2+) contacts are provided by Glu177, Asp199, and His381.

This sequence belongs to the peptidase M20B family. The cofactor is Zn(2+).

It localises to the cytoplasm. It catalyses the reaction Release of the N-terminal residue from a tripeptide.. Functionally, cleaves the N-terminal amino acid of tripeptides. The protein is Peptidase T of Bacillus thuringiensis (strain Al Hakam).